The primary structure comprises 1530 residues: Brefeldin A resistance protein (1530 aa).

Residues 1-26 (MNQNSDTTHGQALGSTLNHTTEVTRI) are compositionally biased toward polar residues. Positions 1–100 (MNQNSDTTHG…SDDSSVDRLA (100 aa)) are disordered. An N-linked (GlcNAc...) asparagine glycan is attached at Asn-28. A compositionally biased stretch (low complexity) spans 36-48 (SSSNVDESLDSSN). Residues 54–64 (KASHTNEEYRS) show a composition bias toward basic and acidic residues. Asn-67 carries an N-linked (GlcNAc...) asparagine glycan. Positions 72–93 (PSSSNEPSPESSSNSDSSSSDD) are enriched in low complexity. Residues 153 to 410 (KTFPDIFLQP…FLDMGFDCHP (258 aa)) form the ABC transporter 1 domain. Residues Asn-273, Asn-334, and Asn-450 are each glycosylated (N-linked (GlcNAc...) asparagine). A phosphoserine mark is found at Ser-486 and Ser-489. Thr-491 is subject to Phosphothreonine. A run of 6 helical transmembrane segments spans residues 539 to 559 (AYIG…GSIF), 575 to 595 (VLFF…ANMF), 620 to 640 (LIVD…VLYF), 649 to 669 (GGFW…SAFF), 684 to 704 (ALGG…IPNI), and 791 to 811 (LAII…ASET). The disordered stretch occupies residues 843 to 864 (PLDLETGQDTQGGDVVKESPDN). The ABC transporter 2 domain maps to 882 to 1125 (FSWRNLNYDI…LLNYFESHGA (244 aa)). 918–925 (GESGAGKT) provides a ligand contact to ATP. Residues Asn-1159 and Asn-1175 are each glycosylated (N-linked (GlcNAc...) asparagine). The residue at position 1186 (Thr-1186) is a Phosphothreonine. 6 helical membrane-spanning segments follow: residues 1220–1240 (ILMS…FTFY), 1255–1275 (AVFM…PKFI), 1300–1320 (AIIV…LCWF), 1338–1358 (YAWL…QAVA), 1367–1387 (ASVV…VLQP), and 1392–1412 (VGFW…EGLL). 2 N-linked (GlcNAc...) asparagine glycosylation sites follow: Asn-1449 and Asn-1460. Residues 1492–1512 (GIFVGYVFFNIFAVLLLFYVF) traverse the membrane as a helical segment.

It belongs to the ABC transporter superfamily. ABCG family. PDR (TC 3.A.1.205) subfamily.

It localises to the membrane. Its function is as follows. Confers hyper-resistance to brefeldin A (BFA), an inhibitor of intracellular protein transport. Could serve as an efflux pump of various antibiotics. In Schizosaccharomyces pombe (strain 972 / ATCC 24843) (Fission yeast), this protein is Brefeldin A resistance protein (bfr1).